Here is a 440-residue protein sequence, read N- to C-terminus: Chromosomal replication initiator protein DnaA (440 aa).

Residues 1 to 75 are domain I, interacts with DnaA modulators; that stretch reads MNPNQILENL…QSGNKASVLI (75 aa). The tract at residues 75 to 99 is domain II; sequence IQAQSAKQSSKSTKIDIAHIKAQST. The domain III, AAA+ region stretch occupies residues 100-316; it reads ILNPSFTFES…GIIISLNAYA (217 aa). ATP is bound by residues glycine 146, glycine 148, lysine 149, and threonine 150. Residues 317–440 form a domain IV, binds dsDNA region; the sequence is TILGQEITLE…KNKILVKSQS (124 aa).

This sequence belongs to the DnaA family. As to quaternary structure, oligomerizes as a right-handed, spiral filament on DNA at oriC.

The protein localises to the cytoplasm. Functionally, plays an essential role in the initiation and regulation of chromosomal replication. ATP-DnaA binds to the origin of replication (oriC) to initiate formation of the DNA replication initiation complex once per cell cycle. Binds the DnaA box (a 9 base pair repeat at the origin) and separates the double-stranded (ds)DNA. Forms a right-handed helical filament on oriC DNA; dsDNA binds to the exterior of the filament while single-stranded (ss)DNA is stabiized in the filament's interior. The ATP-DnaA-oriC complex binds and stabilizes one strand of the AT-rich DNA unwinding element (DUE), permitting loading of DNA polymerase. After initiation quickly degrades to an ADP-DnaA complex that is not apt for DNA replication. Binds acidic phospholipids. The polypeptide is Chromosomal replication initiator protein DnaA (Campylobacter jejuni subsp. jejuni serotype O:6 (strain 81116 / NCTC 11828)).